A 279-amino-acid chain; its full sequence is NH(3)-dependent NAD(+) synthetase (279 aa).

46–53 (GISGGQDS) lines the ATP pocket. Position 52 (Asp52) interacts with Mg(2+). A deamido-NAD(+)-binding site is contributed by Arg145. Thr165 serves as a coordination point for ATP. Residue Glu170 participates in Mg(2+) binding. Positions 178 and 185 each coordinate deamido-NAD(+). Residues Lys194 and Thr216 each coordinate ATP. 265–266 (HK) contributes to the deamido-NAD(+) binding site.

It belongs to the NAD synthetase family. Homodimer.

The catalysed reaction is deamido-NAD(+) + NH4(+) + ATP = AMP + diphosphate + NAD(+) + H(+). It participates in cofactor biosynthesis; NAD(+) biosynthesis; NAD(+) from deamido-NAD(+) (ammonia route): step 1/1. Catalyzes the ATP-dependent amidation of deamido-NAD to form NAD. Uses ammonia as a nitrogen source. The sequence is that of NH(3)-dependent NAD(+) synthetase from Rhodococcus opacus (strain B4).